Reading from the N-terminus, the 377-residue chain is Secreted LysM effector Lys2 (377 aa).

The first 22 residues, 1–22, serve as a signal peptide directing secretion; that stretch reads MVRQSIGLIALQLLNLVSVAQA. Over residues 104 to 119 the composition is skewed to low complexity; it reads TSSSTATTTSQKPTAT. A disordered region spans residues 104–124; the sequence is TSSSTATTTSQKPTATVSPLP. 2 consecutive LysM domains span residues 135–182 and 207–253; these read KYYN…YVCV and KYYK…YYCV.

The protein belongs to the secreted LysM effector family.

Functionally, might have a role in sequestration of chitin oligosaccharides (breakdown products of fungal cell walls that are released during invasion and act as triggers of host immunity) to dampen host defense. In Pochonia chlamydosporia (strain 123) (Metacordyceps chlamydosporia), this protein is Secreted LysM effector Lys2.